A 95-amino-acid polypeptide reads, in one-letter code: Integration host factor subunit beta (95 aa).

Belongs to the bacterial histone-like protein family. In terms of assembly, heterodimer of an alpha and a beta chain.

In terms of biological role, this protein is one of the two subunits of integration host factor, a specific DNA-binding protein that functions in genetic recombination as well as in transcriptional and translational control. The chain is Integration host factor subunit beta from Paracoccus denitrificans (strain Pd 1222).